The sequence spans 109 residues: Large ribosomal subunit protein uL24 (109 aa).

This sequence belongs to the universal ribosomal protein uL24 family. As to quaternary structure, part of the 50S ribosomal subunit.

Functionally, one of two assembly initiator proteins, it binds directly to the 5'-end of the 23S rRNA, where it nucleates assembly of the 50S subunit. Its function is as follows. One of the proteins that surrounds the polypeptide exit tunnel on the outside of the subunit. The chain is Large ribosomal subunit protein uL24 from Syntrophobacter fumaroxidans (strain DSM 10017 / MPOB).